Consider the following 277-residue polypeptide: ATP-dependent Clp protease proteolytic subunit, mitochondrial (277 aa).

The N-terminal 56 residues, Met1–Leu56, are a transit peptide targeting the mitochondrion. The active-site Nucleophile is Ser153. The active site involves His178. Residue Lys200 is modified to N6-succinyllysine. Lys211 is subject to N6-acetyllysine. Positions Val246 to Thr277 are disordered. Low complexity predominate over residues Glu265–Thr277.

It belongs to the peptidase S14 family. In terms of assembly, fourteen CLPP subunits assemble into 2 heptameric rings which stack back to back to give a disk-like structure with a central cavity. Component of the ClpXP complex formed by the assembly of two CLPP heptameric rings with two CLPX hexameric rings, giving rise to a symmetrical structure with two central CLPP rings flanked by a CLPX ring at either end of the complex. In terms of tissue distribution, detected in liver (at protein level). Predominantly expressed in skeletal muscle. Intermediate levels in heart, liver and pancreas. Low in brain, placenta, lung and kidney.

It localises to the mitochondrion matrix. The enzyme catalyses Hydrolysis of proteins to small peptides in the presence of ATP and magnesium. alpha-casein is the usual test substrate. In the absence of ATP, only oligopeptides shorter than five residues are hydrolyzed (such as succinyl-Leu-Tyr-|-NHMec, and Leu-Tyr-Leu-|-Tyr-Trp, in which cleavage of the -Tyr-|-Leu- and -Tyr-|-Trp bonds also occurs).. Functionally, protease component of the ClpXP complex that cleaves peptides and various proteins in an ATP-dependent process. Has low peptidase activity in the absence of CLPX. The ClpXP complex can degrade CSN1S1, CSN2 and CSN3, as well as synthetic peptides (in vitro) and may be responsible for a fairly general and central housekeeping function rather than for the degradation of specific substrates. Cleaves PINK1 in the mitochondrion. This Homo sapiens (Human) protein is ATP-dependent Clp protease proteolytic subunit, mitochondrial.